Here is a 355-residue protein sequence, read N- to C-terminus: Protein RecA (355 aa).

65–72 (GPESSGKT) provides a ligand contact to ATP.

This sequence belongs to the RecA family.

It is found in the cytoplasm. Can catalyze the hydrolysis of ATP in the presence of single-stranded DNA, the ATP-dependent uptake of single-stranded DNA by duplex DNA, and the ATP-dependent hybridization of homologous single-stranded DNAs. It interacts with LexA causing its activation and leading to its autocatalytic cleavage. The protein is Protein RecA of Pseudomonas putida (Arthrobacter siderocapsulatus).